Here is an 89-residue protein sequence, read N- to C-terminus: Small ribosomal subunit protein uS15 (89 aa).

Belongs to the universal ribosomal protein uS15 family. Part of the 30S ribosomal subunit. Forms a bridge to the 50S subunit in the 70S ribosome, contacting the 23S rRNA.

Functionally, one of the primary rRNA binding proteins, it binds directly to 16S rRNA where it helps nucleate assembly of the platform of the 30S subunit by binding and bridging several RNA helices of the 16S rRNA. Forms an intersubunit bridge (bridge B4) with the 23S rRNA of the 50S subunit in the ribosome. The polypeptide is Small ribosomal subunit protein uS15 (Bordetella parapertussis (strain 12822 / ATCC BAA-587 / NCTC 13253)).